A 1907-amino-acid chain; its full sequence is Probable RNA-directed RNA polymerase (1907 aa).

Residues 42-61 (NTHNDHEETHGESPEVPKAS) are disordered. Basic and acidic residues predominate over residues 44-56 (HNDHEETHGESPE).

The protein belongs to the totiviridae RNA-directed RNA polymerase family.

The enzyme catalyses RNA(n) + a ribonucleoside 5'-triphosphate = RNA(n+1) + diphosphate. RNA-dependent RNA polymerase which replicates the viral genome. Catalyzes the transcription of fully conservative plus-strand genomic RNAs that are extruded from the virion into the cytoplasm where they function as mRNAs for translation of viral proteins and also as substrates for encapsidation to form new virions. Once encapsidated, the positive strand is converted to dsRNA by the RNA-directed RNA polymerase. Displays ssRNA-binding activity. The protein is Probable RNA-directed RNA polymerase (gag-pol) of Giardia intestinalis (Giardia lamblia).